The chain runs to 269 residues: Formamidopyrimidine-DNA glycosylase (269 aa).

Residue proline 2 is the Schiff-base intermediate with DNA of the active site. Glutamate 3 acts as the Proton donor in catalysis. The active-site Proton donor; for beta-elimination activity is lysine 57. Residues histidine 90, arginine 109, and lysine 150 each contribute to the DNA site. The segment at 235-269 (QVYGRAGEPCRACGTPIESAKHGQRSTFFCPRCQR) adopts an FPG-type zinc-finger fold. The active-site Proton donor; for delta-elimination activity is the arginine 259.

This sequence belongs to the FPG family. Monomer. Requires Zn(2+) as cofactor.

The catalysed reaction is Hydrolysis of DNA containing ring-opened 7-methylguanine residues, releasing 2,6-diamino-4-hydroxy-5-(N-methyl)formamidopyrimidine.. It catalyses the reaction 2'-deoxyribonucleotide-(2'-deoxyribose 5'-phosphate)-2'-deoxyribonucleotide-DNA = a 3'-end 2'-deoxyribonucleotide-(2,3-dehydro-2,3-deoxyribose 5'-phosphate)-DNA + a 5'-end 5'-phospho-2'-deoxyribonucleoside-DNA + H(+). Its function is as follows. Involved in base excision repair of DNA damaged by oxidation or by mutagenic agents. Acts as a DNA glycosylase that recognizes and removes damaged bases. Has a preference for oxidized purines, such as 7,8-dihydro-8-oxoguanine (8-oxoG). Has AP (apurinic/apyrimidinic) lyase activity and introduces nicks in the DNA strand. Cleaves the DNA backbone by beta-delta elimination to generate a single-strand break at the site of the removed base with both 3'- and 5'-phosphates. This Serratia proteamaculans (strain 568) protein is Formamidopyrimidine-DNA glycosylase.